Consider the following 325-residue polypeptide: DNA-directed RNA polymerase subunit alpha (325 aa).

The segment at 1-231 is alpha N-terminal domain (alpha-NTD); it reads MQTSLLKPKI…DQLSVFAALE (231 aa). Residues 246 to 325 form an alpha C-terminal domain (alpha-CTD) region; that stretch reads IDPILLRPVD…ENWPPAGLDK (80 aa).

The protein belongs to the RNA polymerase alpha chain family. As to quaternary structure, homodimer. The RNAP catalytic core consists of 2 alpha, 1 beta, 1 beta' and 1 omega subunit. When a sigma factor is associated with the core the holoenzyme is formed, which can initiate transcription.

It catalyses the reaction RNA(n) + a ribonucleoside 5'-triphosphate = RNA(n+1) + diphosphate. Functionally, DNA-dependent RNA polymerase catalyzes the transcription of DNA into RNA using the four ribonucleoside triphosphates as substrates. This chain is DNA-directed RNA polymerase subunit alpha, found in Burkholderia multivorans (strain ATCC 17616 / 249).